We begin with the raw amino-acid sequence, 509 residues long: tRNA-2-methylthio-N(6)-dimethylallyladenosine synthase (509 aa).

A compositionally biased stretch (polar residues) spans 1–15; the sequence is MNEQQRLASQQVNSS. Residues 1–26 form a disordered region; it reads MNEQQRLASQQVNSSTKKEEKDYSKY. The segment covering 16 to 25 has biased composition (basic and acidic residues); the sequence is TKKEEKDYSK. An MTTase N-terminal domain is found at 66-184; it reads RKFYIRTYGC…LPYILKDAMF (119 aa). [4Fe-4S] cluster contacts are provided by Cys75, Cys111, Cys145, Cys221, Cys225, and Cys228. The Radical SAM core domain maps to 207 to 437; sequence RRGDIKAWVN…NALVNKLAIE (231 aa). Residues 440 to 503 enclose the TRAM domain; that stretch reads DRYKGQIVEV…TWSLNGELVE (64 aa).

Belongs to the methylthiotransferase family. MiaB subfamily. As to quaternary structure, monomer. [4Fe-4S] cluster is required as a cofactor.

Its subcellular location is the cytoplasm. It catalyses the reaction N(6)-dimethylallyladenosine(37) in tRNA + (sulfur carrier)-SH + AH2 + 2 S-adenosyl-L-methionine = 2-methylsulfanyl-N(6)-dimethylallyladenosine(37) in tRNA + (sulfur carrier)-H + 5'-deoxyadenosine + L-methionine + A + S-adenosyl-L-homocysteine + 2 H(+). Its function is as follows. Catalyzes the methylthiolation of N6-(dimethylallyl)adenosine (i(6)A), leading to the formation of 2-methylthio-N6-(dimethylallyl)adenosine (ms(2)i(6)A) at position 37 in tRNAs that read codons beginning with uridine. The protein is tRNA-2-methylthio-N(6)-dimethylallyladenosine synthase of Bacillus cereus (strain ZK / E33L).